We begin with the raw amino-acid sequence, 176 residues long: NAD(P)H-quinone oxidoreductase subunit 6, chloroplastic (176 aa).

The next 5 helical transmembrane spans lie at 10–30 (ILVL…VLLT), 33–53 (IYSA…YFLL), 60–80 (VAQL…AVMF), 95–115 (IGDG…MTTI), and 152–172 (FYLP…GAIT).

This sequence belongs to the complex I subunit 6 family. NDH is composed of at least 16 different subunits, 5 of which are encoded in the nucleus.

It is found in the plastid. The protein resides in the chloroplast thylakoid membrane. It catalyses the reaction a plastoquinone + NADH + (n+1) H(+)(in) = a plastoquinol + NAD(+) + n H(+)(out). The enzyme catalyses a plastoquinone + NADPH + (n+1) H(+)(in) = a plastoquinol + NADP(+) + n H(+)(out). In terms of biological role, NDH shuttles electrons from NAD(P)H:plastoquinone, via FMN and iron-sulfur (Fe-S) centers, to quinones in the photosynthetic chain and possibly in a chloroplast respiratory chain. The immediate electron acceptor for the enzyme in this species is believed to be plastoquinone. Couples the redox reaction to proton translocation, and thus conserves the redox energy in a proton gradient. The protein is NAD(P)H-quinone oxidoreductase subunit 6, chloroplastic (ndhG) of Saccharum hybrid (Sugarcane).